Here is a 336-residue protein sequence, read N- to C-terminus: Dihydroorotate dehydrogenase (quinone) (336 aa).

FMN is bound by residues 62 to 66 (AGLDK) and Thr-86. Residue Lys-66 participates in substrate binding. A substrate-binding site is contributed by 111 to 115 (NRMGF). Asn-139 and Asn-172 together coordinate FMN. Asn-172 serves as a coordination point for substrate. The active-site Nucleophile is the Ser-175. Asn-177 lines the substrate pocket. Positions 217 and 245 each coordinate FMN. Residue 246 to 247 (NT) coordinates substrate. FMN is bound by residues Gly-268, Gly-297, and 318-319 (YS).

The protein belongs to the dihydroorotate dehydrogenase family. Type 2 subfamily. In terms of assembly, monomer. It depends on FMN as a cofactor.

It localises to the cell membrane. The catalysed reaction is (S)-dihydroorotate + a quinone = orotate + a quinol. It functions in the pathway pyrimidine metabolism; UMP biosynthesis via de novo pathway; orotate from (S)-dihydroorotate (quinone route): step 1/1. Catalyzes the conversion of dihydroorotate to orotate with quinone as electron acceptor. This Aliivibrio fischeri (strain ATCC 700601 / ES114) (Vibrio fischeri) protein is Dihydroorotate dehydrogenase (quinone).